The chain runs to 446 residues: Hercynine oxygenase (446 aa).

Position 51 (His-51) interacts with Fe cation. 87–90 (RASR) is a gamma-L-glutamyl-L-cysteine binding site. 2 residues coordinate Fe cation: His-134 and His-138. Gamma-L-glutamyl-L-cysteine contacts are provided by Asp-416 and Arg-420.

This sequence belongs to the EgtB family. In terms of assembly, monomer. Fe(2+) is required as a cofactor.

The enzyme catalyses gamma-L-glutamyl-L-cysteine + hercynine + O2 = gamma-L-glutamyl-hercynylcysteine S-oxide + H2O. It participates in amino-acid biosynthesis; ergothioneine biosynthesis. In terms of biological role, catalyzes the oxidative sulfurization of hercynine (N-alpha,N-alpha,N-alpha-trimethyl-L-histidine) into hercynyl-gamma-L-glutamyl-L-cysteine sulfoxide, a step in the biosynthesis pathway of ergothioneine. This chain is Hercynine oxygenase, found in Mycolicibacterium thermoresistibile (strain ATCC 19527 / DSM 44167 / CIP 105390 / JCM 6362 / NCTC 10409 / 316) (Mycobacterium thermoresistibile).